Reading from the N-terminus, the 215-residue chain is MSARLQDHFNNVEKILNGFSVECYVAYGEINISIKDQRDIHLVLKKLKKEYHFKQLTDITAVDYLTYGQSDWQVGKVVSQTGFSRGRQQGFKTADVNNRFEIIYQLLSMANNVRVRVKCKLKDAQIIMVDSVEDLWPSANWAEREVYDMFGIYFNNHPDLRRVLTDYGFVGHPLRKDFPQTGYVEMRYDENLGKVVYEPVEIDDRVNAPRVIRNQ.

Belongs to the complex I 30 kDa subunit family. In terms of assembly, NDH-1 is composed of 14 different subunits. Subunits NuoB, C, D, E, F, and G constitute the peripheral sector of the complex.

Its subcellular location is the cell inner membrane. The enzyme catalyses a quinone + NADH + 5 H(+)(in) = a quinol + NAD(+) + 4 H(+)(out). NDH-1 shuttles electrons from NADH, via FMN and iron-sulfur (Fe-S) centers, to quinones in the respiratory chain. The immediate electron acceptor for the enzyme in this species is believed to be ubiquinone. Couples the redox reaction to proton translocation (for every two electrons transferred, four hydrogen ions are translocated across the cytoplasmic membrane), and thus conserves the redox energy in a proton gradient. The sequence is that of NADH-quinone oxidoreductase subunit C from Francisella philomiragia subsp. philomiragia (strain ATCC 25017 / CCUG 19701 / FSC 153 / O#319-036).